The following is a 319-amino-acid chain: GCN5-related N-acetyltransferase 5, chloroplastic (319 aa).

The transit peptide at 1-55 (MAALSISLAFSVDSLKPTQSTKFGFSSSSHRYPLLYSCKSHRSNLRFAFPPSSVS) directs the protein to the chloroplast. Residues 109 to 297 (MWVRVMRHEE…KHLMRKKLLP (189 aa)) enclose the N-acetyltransferase domain. Acetyl-CoA-binding positions include 218–220 (MTV), 226–231 (RRGIGW), 258–260 (DEA), and Y265. Residue Y265 is the Proton donor of the active site.

The protein belongs to the acetyltransferase family. GNAT subfamily. In terms of assembly, oligomer. In terms of processing, autoacetylated. In terms of tissue distribution, expressed in green tissues.

The protein resides in the plastid. It localises to the chloroplast. The catalysed reaction is an N-terminal L-alpha-aminoacyl-[protein] + acetyl-CoA = N-terminal N(alpha)-acetyl-L-alpha-aminoacyl-[protein] + CoA + H(+). It carries out the reaction L-lysyl-[protein] + acetyl-CoA = N(6)-acetyl-L-lysyl-[protein] + CoA + H(+). The enzyme catalyses N-terminal L-alanyl-[protein] + acetyl-CoA = N-terminal N(alpha)-acetyl-L-alanyl-[protein] + CoA + H(+). It catalyses the reaction N-terminal L-seryl-[protein] + acetyl-CoA = N-terminal N(alpha)-acetyl-L-seryl-[protein] + CoA + H(+). The catalysed reaction is N-terminal L-methionyl-[protein] + acetyl-CoA = N-terminal N(alpha)-acetyl-L-methionyl-[protein] + CoA + H(+). It carries out the reaction N-terminal L-valyl-[protein] + acetyl-CoA = N-terminal N(alpha)-acetyl-L-valyl-[protein] + CoA + H(+). The enzyme catalyses N-terminal L-threonyl-[protein] + acetyl-CoA = N-terminal N(alpha)-acetyl-L-threonyl-[protein] + CoA + H(+). Its function is as follows. Protein acetyltransferase with dual specificity triggering both N-alpha-acetylation (NTA), with a large spectrum of modified N-termini, including methionine, alanine, serine and to a lower extent threonine and valine as substrates, and epsilon-lysine acetylation (KA). The polypeptide is GCN5-related N-acetyltransferase 5, chloroplastic (Arabidopsis thaliana (Mouse-ear cress)).